The chain runs to 498 residues: DEAD-box ATP-dependent RNA helicase 12 (498 aa).

Residues 1 to 114 are disordered; the sequence is MNTNRGRYPP…RLPPPDTRYQ (114 aa). Low complexity predominate over residues 27–65; the sequence is SYRQQQPPQDQQYVQRGYSQNPQQMQLQQQHQQQQQQQQ. Residues 74–96 are compositionally biased toward polar residues; the sequence is GNASNANEVVQQTTQPEASSDAN. A Q motif motif is present at residues 124 to 152; that stretch reads NEFEDYFLKRDLLKGIYEKGFEKPSPIQE. The region spanning 155 to 325 is the Helicase ATP-binding domain; the sequence is IPIALTGSDI…DRHLRKPYVI (171 aa). 168–175 serves as a coordination point for ATP; sequence AKNGTGKT. Position 230 is a phosphothreonine (T230). Residues 273-276 carry the DEAD box motif; the sequence is DEAD. One can recognise a Helicase C-terminal domain in the interval 335–495; sequence GVTQYYAFVE…PIPSNIDQAI (161 aa).

It belongs to the DEAD box helicase family. DDX6/DHH1 subfamily.

It localises to the cytoplasm. The protein localises to the P-body. It catalyses the reaction ATP + H2O = ADP + phosphate + H(+). In terms of biological role, ATP-dependent RNA helicase involved in mRNA turnover, and more specifically in mRNA decapping. In Arabidopsis thaliana (Mouse-ear cress), this protein is DEAD-box ATP-dependent RNA helicase 12 (RH12).